The chain runs to 569 residues: MQTEHTAELNLLWGTLILEELARLGVKHVCMAPGSRSTPLTLAAAKQSKLSQHIHFDERGLGFMALGLAKASQAPVAIITTSGTAVANLYPAIIEAWLTHVPLIVLSGDRPPELIDCGANQAIIQPAIFAQYAKQLNLPTPDLNIAPQALLSLLDDAVCNQSQPVHINCMYREPLYPNEPSVDFSRYLAPIAKWQQQTKPYSQFATMNSGQMPTSDALARFVHGKGVIVAATLAPEQQSEELIVLAQKLGWPIVTDAQSQLRQHGGAIGNIDQLLQQPKSKALLAQAEKVLVFGGRILSKRLISYLNDQDWKDYWQVLPQQQRLDPSNKPKQVWIAPAHQFAALAWPRSSQANWALNLVQFNDELETLYQQQIDHAEFGEAQAIRAIAKRQTNEQQLFIGNSLPIRLYDMFAPITTSSANVFTNRGASGIDGLLATACGVAIAGAKPTTLIIGDISALHDLNSLAIARTVTSPFVIVILNNDGGNIFNLLPVPNEQLRSDYYRLSHGLEFGFGAAMFGLAYNQVDSLSDFIESYEYAMTYSGPSVIEVTVAQNQASEQIAQISSWVKQS.

Belongs to the TPP enzyme family. MenD subfamily. In terms of assembly, homodimer. Mg(2+) serves as cofactor. It depends on Mn(2+) as a cofactor. Thiamine diphosphate is required as a cofactor.

The catalysed reaction is isochorismate + 2-oxoglutarate + H(+) = 5-enolpyruvoyl-6-hydroxy-2-succinyl-cyclohex-3-ene-1-carboxylate + CO2. It functions in the pathway quinol/quinone metabolism; 1,4-dihydroxy-2-naphthoate biosynthesis; 1,4-dihydroxy-2-naphthoate from chorismate: step 2/7. It participates in quinol/quinone metabolism; menaquinone biosynthesis. Its function is as follows. Catalyzes the thiamine diphosphate-dependent decarboxylation of 2-oxoglutarate and the subsequent addition of the resulting succinic semialdehyde-thiamine pyrophosphate anion to isochorismate to yield 2-succinyl-5-enolpyruvyl-6-hydroxy-3-cyclohexene-1-carboxylate (SEPHCHC). This chain is 2-succinyl-5-enolpyruvyl-6-hydroxy-3-cyclohexene-1-carboxylate synthase, found in Shewanella halifaxensis (strain HAW-EB4).